Consider the following 350-residue polypeptide: Cobalt-precorrin-5B C(1)-methyltransferase (350 aa).

Belongs to the CbiD family.

It carries out the reaction Co-precorrin-5B + S-adenosyl-L-methionine = Co-precorrin-6A + S-adenosyl-L-homocysteine. It participates in cofactor biosynthesis; adenosylcobalamin biosynthesis; cob(II)yrinate a,c-diamide from sirohydrochlorin (anaerobic route): step 6/10. Its function is as follows. Catalyzes the methylation of C-1 in cobalt-precorrin-5B to form cobalt-precorrin-6A. The chain is Cobalt-precorrin-5B C(1)-methyltransferase from Sulfurisphaera tokodaii (strain DSM 16993 / JCM 10545 / NBRC 100140 / 7) (Sulfolobus tokodaii).